The primary structure comprises 249 residues: 1-(5-phosphoribosyl)-5-[(5-phosphoribosylamino)methylideneamino] imidazole-4-carboxamide isomerase (249 aa).

The Proton acceptor role is filled by aspartate 11. Aspartate 133 serves as the catalytic Proton donor.

Belongs to the HisA/HisF family.

It localises to the cytoplasm. It catalyses the reaction 1-(5-phospho-beta-D-ribosyl)-5-[(5-phospho-beta-D-ribosylamino)methylideneamino]imidazole-4-carboxamide = 5-[(5-phospho-1-deoxy-D-ribulos-1-ylimino)methylamino]-1-(5-phospho-beta-D-ribosyl)imidazole-4-carboxamide. It functions in the pathway amino-acid biosynthesis; L-histidine biosynthesis; L-histidine from 5-phospho-alpha-D-ribose 1-diphosphate: step 4/9. This chain is 1-(5-phosphoribosyl)-5-[(5-phosphoribosylamino)methylideneamino] imidazole-4-carboxamide isomerase, found in Haemophilus influenzae (strain 86-028NP).